Here is a 150-residue protein sequence, read N- to C-terminus: Large ribosomal subunit protein eL19 (150 aa).

The disordered stretch occupies residues 56–89; the sequence is KGQSRARARAFQEARKKGRHRGPGSKKGKKTARM. Over residues 71-89 the composition is skewed to basic residues; that stretch reads KKGRHRGPGSKKGKKTARM.

This sequence belongs to the eukaryotic ribosomal protein eL19 family. In terms of assembly, part of the 50S ribosomal subunit.

Functionally, binds to the 23S rRNA. The polypeptide is Large ribosomal subunit protein eL19 (Thermococcus kodakarensis (strain ATCC BAA-918 / JCM 12380 / KOD1) (Pyrococcus kodakaraensis (strain KOD1))).